A 143-amino-acid chain; its full sequence is Ribosome maturation factor RimP (143 aa).

Belongs to the RimP family.

Its subcellular location is the cytoplasm. Functionally, required for maturation of 30S ribosomal subunits. This is Ribosome maturation factor RimP from Nitrosomonas eutropha (strain DSM 101675 / C91 / Nm57).